Consider the following 81-residue polypeptide: Protein translocase subunit SecE (81 aa).

A helical membrane pass occupies residues 50–70 (VAVILMVILVSTVIYFVDQIF).

Belongs to the SecE/SEC61-gamma family. In terms of assembly, component of the Sec protein translocase complex. Heterotrimer consisting of SecY, SecE and SecG subunits. The heterotrimers can form oligomers, although 1 heterotrimer is thought to be able to translocate proteins. Interacts with the ribosome. Interacts with SecDF, and other proteins may be involved. Interacts with SecA.

The protein localises to the cell inner membrane. It is found in the cellular thylakoid membrane. In terms of biological role, essential subunit of the Sec protein translocation channel SecYEG. Clamps together the 2 halves of SecY. May contact the channel plug during translocation. This chain is Protein translocase subunit SecE, found in Synechocystis sp. (strain ATCC 27184 / PCC 6803 / Kazusa).